The primary structure comprises 249 residues: Type III pantothenate kinase (249 aa).

An ATP-binding site is contributed by 6–13 (DVGNTHTT). 101-104 (GADR) contributes to the substrate binding site. Asp103 (proton acceptor) is an active-site residue. Asp123 provides a ligand contact to K(+). Residue Thr126 coordinates ATP. Thr177 is a binding site for substrate.

This sequence belongs to the type III pantothenate kinase family. Homodimer. It depends on NH4(+) as a cofactor. K(+) serves as cofactor.

The protein localises to the cytoplasm. The catalysed reaction is (R)-pantothenate + ATP = (R)-4'-phosphopantothenate + ADP + H(+). It functions in the pathway cofactor biosynthesis; coenzyme A biosynthesis; CoA from (R)-pantothenate: step 1/5. Its function is as follows. Catalyzes the phosphorylation of pantothenate (Pan), the first step in CoA biosynthesis. The protein is Type III pantothenate kinase of Thermosipho africanus (strain TCF52B).